We begin with the raw amino-acid sequence, 410 residues long: Aspartate aminotransferase (410 aa).

Residues Gly-47, Trp-135, and Asn-185 each contribute to the L-aspartate site. An N6-(pyridoxal phosphate)lysine modification is found at Lys-249. Residue Arg-385 participates in L-aspartate binding.

It belongs to the class-I pyridoxal-phosphate-dependent aminotransferase family. Homodimer. Pyridoxal 5'-phosphate is required as a cofactor.

Its subcellular location is the cytoplasm. It catalyses the reaction L-aspartate + 2-oxoglutarate = oxaloacetate + L-glutamate. The catalysed reaction is L-2-aminoadipate + 2-oxoglutarate = 2-oxoadipate + L-glutamate. Catalyzes the reversible conversion of aspartate and 2-oxoglutarate to glutamate and oxaloacetate. Genetic evidence shows that this protein is involved in L-lysine catabolism. It may have 2-aminoadipate:2-oxoglutarate aminotransferase activity. The sequence is that of Aspartate aminotransferase (aatB) from Rhizobium meliloti (strain 1021) (Ensifer meliloti).